The chain runs to 144 residues: Small ribosomal subunit protein bS6 (144 aa).

The segment at 97 to 144 (DTEQSLIMKSKDEKGDKPERSERRRRDDEEVDAAPAATDTDGDNAEAA) is disordered. The segment covering 105 to 124 (KSKDEKGDKPERSERRRRDD) has biased composition (basic and acidic residues).

It belongs to the bacterial ribosomal protein bS6 family.

Functionally, binds together with bS18 to 16S ribosomal RNA. The polypeptide is Small ribosomal subunit protein bS6 (Xanthomonas campestris pv. campestris (strain B100)).